Here is a 331-residue protein sequence, read N- to C-terminus: Biotin synthase (331 aa).

The 225-residue stretch at 43–267 (NTVQVSTLLS…LMPASYVRLS (225 aa)) folds into the Radical SAM core domain. Residues Cys58, Cys62, and Cys65 each contribute to the [4Fe-4S] cluster site. [2Fe-2S] cluster contacts are provided by Cys102, Cys133, Cys193, and Arg265.

It belongs to the radical SAM superfamily. Biotin synthase family. Homodimer. Requires [4Fe-4S] cluster as cofactor. [2Fe-2S] cluster is required as a cofactor.

The catalysed reaction is (4R,5S)-dethiobiotin + (sulfur carrier)-SH + 2 reduced [2Fe-2S]-[ferredoxin] + 2 S-adenosyl-L-methionine = (sulfur carrier)-H + biotin + 2 5'-deoxyadenosine + 2 L-methionine + 2 oxidized [2Fe-2S]-[ferredoxin]. Its pathway is cofactor biosynthesis; biotin biosynthesis; biotin from 7,8-diaminononanoate: step 2/2. In terms of biological role, catalyzes the conversion of dethiobiotin (DTB) to biotin by the insertion of a sulfur atom into dethiobiotin via a radical-based mechanism. This is Biotin synthase from Alkalilimnicola ehrlichii (strain ATCC BAA-1101 / DSM 17681 / MLHE-1).